The chain runs to 783 residues: uncharacterized protein (783 aa).

Residues methionine 1 to aspartate 22 are disordered. At methionine 1–arginine 109 the chain is on the cytoplasmic side. A helical; Signal-anchor for type II membrane protein transmembrane segment spans residues arginine 110–serine 127. Over aspartate 128–phenylalanine 783 the chain is Extracellular. Asparagine 139 and asparagine 213 each carry an N-linked (GlcNAc...) asparagine glycan. The PA domain occupies histidine 241–tryptophan 333. N-linked (GlcNAc...) asparagine glycosylation is present at asparagine 529.

It is found in the cell membrane. This is an uncharacterized protein from Saccharomyces cerevisiae (strain ATCC 204508 / S288c) (Baker's yeast).